A 1124-amino-acid chain; its full sequence is SH3 and PX domain-containing protein 2A (1124 aa).

The PX domain occupies 4 to 128; it reads YCVQDATVVD…RFFEARPEDV (125 aa). The 60-residue stretch at 166–225 folds into the SH3 1 domain; the sequence is MILEQYVVVSNYKKQENSELSLQAGEVVDVIEKNESGWWFVSTSEEQGWVPATYLEAQNG. Threonine 256 carries the phosphothreonine modification. The SH3 2 domain occupies 266–325; sequence SREEKYVTVQPYTSQSKDEIGFEKGVTVEVIRKNLEGWWYIRYLGKEGWAPASYLKKAKD. Phosphoserine occurs at positions 405 and 420. 4 disordered regions span residues 414-443, 504-672, 692-830, and 886-952; these read QRAQ…PKPP, RKKP…KLKA, SVTI…PKKE, and YLVA…GKTS. The SH3 3 domain maps to 447-506; it reads SVEVEYYTIAEFQSCISDGISFRGGQKAEVIDKNSGGWWYVQIGEKEGWAPASYIDKRKK. Serine 546 and serine 566 each carry phosphoserine. Over residues 575-585 the composition is skewed to basic and acidic residues; sequence SGDRGSGDKHP. Phosphoserine is present on serine 592. Over residues 607–619 the composition is skewed to acidic residues; sequence SSEDVALEEETIY. Composition is skewed to low complexity over residues 633–669 and 692–709; these read SARG…SLLK and SVTI…SSLS. The residue at position 643 (serine 643) is a Phosphoserine. The segment covering 713-739 has biased composition (basic and acidic residues); sequence GDLKPRSASDAGIRDTPKVGTKKDPDV. Position 728 is a phosphothreonine (threonine 728). Phosphoserine is present on residues serine 764, serine 766, and serine 812. Threonine 822 bears the Phosphothreonine mark. Residues 833-892 enclose the SH3 4 domain; that stretch reads GQGATYVTCSAYQKVQDSEISFPEGAEVHVLEKAESGWWYVRFGELEGWAPSHYLVAEEN. Residues 907–937 are a coiled coil; that stretch reads SSQNEGKSDSLEKIEKRVQALNTVNQSKRAT. Positions 912 to 924 are enriched in basic and acidic residues; sequence GKSDSLEKIEKRV. A compositionally biased stretch (polar residues) spans 926-935; it reads ALNTVNQSKR. Serine 993, serine 1007, serine 1008, and serine 1029 each carry phosphoserine. The tract at residues 1020 to 1050 is disordered; that stretch reads KGRLAERAASQGSESPLLPTQRKGIPVSPVR. The region spanning 1063 to 1124 is the SH3 5 domain; it reads NLKDVYISIA…VPSNYLEKKN (62 aa).

The protein belongs to the SH3PXD2 family. Interacts with ADAM12, ADAM15 and ADAM19. Interacts with NOXO1. Interacts (via SH3 domains) with NOXA1; the interaction is direct. Interacts (via N-terminus) with CYBA. Interacts with FASLG. Interacts (via PX domain) with RAB40B (GTP-bound); interaction promotes invadopodia-mediated extracellular matrix degradation. Post-translationally, tyrosine phosphorylated by SRC. Phosphorylation plays a regulatory role in the protein localization. The intramolecular interaction of the PX domain with the third SH3 domain maintains the protein in the cytoplasm and phosphorylation disrupts this interaction, resulting in the redistribution of the protein from cytoplasm to the perimembrane region. Phosphorylated on serine upon DNA damage, probably by ATM or ATR. Widely expressed. Not found in the spleen and testis.

The protein localises to the cytoplasm. It is found in the cell projection. Its subcellular location is the podosome. In terms of biological role, adapter protein involved in invadopodia and podosome formation, extracellular matrix degradation and invasiveness of some cancer cells. Binds matrix metalloproteinases (ADAMs), NADPH oxidases (NOXs) and phosphoinositides. Acts as an organizer protein that allows NOX1- or NOX3-dependent reactive oxygen species (ROS) generation and ROS localization. In association with ADAM12, mediates the neurotoxic effect of amyloid-beta peptide. This Mus musculus (Mouse) protein is SH3 and PX domain-containing protein 2A.